A 499-amino-acid polypeptide reads, in one-letter code: Bifunctional purine biosynthesis protein PurH (499 aa).

The 144-residue stretch at 1 to 144 folds into the MGS-like domain; it reads MIKRALISVF…KNFKDVVVLT (144 aa).

Belongs to the PurH family.

The catalysed reaction is (6R)-10-formyltetrahydrofolate + 5-amino-1-(5-phospho-beta-D-ribosyl)imidazole-4-carboxamide = 5-formamido-1-(5-phospho-D-ribosyl)imidazole-4-carboxamide + (6S)-5,6,7,8-tetrahydrofolate. The enzyme catalyses IMP + H2O = 5-formamido-1-(5-phospho-D-ribosyl)imidazole-4-carboxamide. It participates in purine metabolism; IMP biosynthesis via de novo pathway; 5-formamido-1-(5-phospho-D-ribosyl)imidazole-4-carboxamide from 5-amino-1-(5-phospho-D-ribosyl)imidazole-4-carboxamide (10-formyl THF route): step 1/1. It functions in the pathway purine metabolism; IMP biosynthesis via de novo pathway; IMP from 5-formamido-1-(5-phospho-D-ribosyl)imidazole-4-carboxamide: step 1/1. This Clostridium botulinum (strain Okra / Type B1) protein is Bifunctional purine biosynthesis protein PurH.